The following is a 352-amino-acid chain: N-acetyl-gamma-glutamyl-phosphate reductase (352 aa).

Cys155 is a catalytic residue.

It belongs to the NAGSA dehydrogenase family. Type 1 subfamily.

It localises to the cytoplasm. The enzyme catalyses N-acetyl-L-glutamate 5-semialdehyde + phosphate + NADP(+) = N-acetyl-L-glutamyl 5-phosphate + NADPH + H(+). It participates in amino-acid biosynthesis; L-arginine biosynthesis; N(2)-acetyl-L-ornithine from L-glutamate: step 3/4. Functionally, catalyzes the NADPH-dependent reduction of N-acetyl-5-glutamyl phosphate to yield N-acetyl-L-glutamate 5-semialdehyde. This is N-acetyl-gamma-glutamyl-phosphate reductase from Cyanothece sp. (strain PCC 7425 / ATCC 29141).